The chain runs to 100 residues: Co-chaperonin GroES (100 aa).

Belongs to the GroES chaperonin family. As to quaternary structure, heptamer of 7 subunits arranged in a ring. Interacts with the chaperonin GroEL.

Its subcellular location is the cytoplasm. Its function is as follows. Together with the chaperonin GroEL, plays an essential role in assisting protein folding. The GroEL-GroES system forms a nano-cage that allows encapsulation of the non-native substrate proteins and provides a physical environment optimized to promote and accelerate protein folding. GroES binds to the apical surface of the GroEL ring, thereby capping the opening of the GroEL channel. This chain is Co-chaperonin GroES, found in Nocardia farcinica (strain IFM 10152).